The sequence spans 557 residues: MPIPVGNTKNDFAALQAKLDADAAEIEKWWSDSRWSKTKRNYSARDIAVRRGTFPPIEYPSSVMARKLFKVLEKHHNEGTVSKTFGALDPVQISQMAKYLDTIYISGWQCSSTASTSNEPGPDLADYPMDTVPNKVEHLFKAQLFHDRKQLEARSKAKSQEELDEMGAPIDYLTPIVADADAGHGGLTAVFKLTKMFIERGAAGIHMEDQTSTNKKCGHMAGRCVIPVQEHVNRLVTIRMCADIMHSDLIVVARTDSEAATLISSTIDTRDHYFIVGATNPNIEPFAEVLNDAIMSGASGQELADIEQKWCRDAGLKLFHEAVIDEIERSALSNKQELIKKFTSKVGPLTETSHREAKKLAKEILGHEIFFDWELPRVREGLYRYRGGTQCSIMRARAFAPYADLVWMESNYPDFQQAKEFAEGVKEKFPDQWLAYNLSPSFNWPKAMSVDEQHTFIQRLGDLGYIWQFITLAGLHTNALAVHNFSRDFAKDGMKAYAQNVQQREMDDGVDVLKHQKWSGAEYIDGLLKLAQGGVSATAAMGTGVTEDQFKENGVKK.

Thr53 bears the Phosphothreonine mark. Residue 106 to 108 (SGW) participates in substrate binding. A Mg(2+)-binding site is contributed by Asp179. Cys217 (proton acceptor) is an active-site residue. Residues 218 to 219 (GH), Arg254, 437 to 441 (NLSPS), and Thr471 contribute to the substrate site.

It belongs to the isocitrate lyase/PEP mutase superfamily. Isocitrate lyase family. In terms of assembly, homotetramer. Mg(2+) is required as a cofactor. In terms of processing, phosphorylated in response to elevated glucose levels, leading first to reversible inactivation of the enzyme (short-term inactivation), and at a later stage to proteolytic degradation of the protein (long-term inactivation).

The protein localises to the cytoplasm. It localises to the secreted. Its subcellular location is the extracellular space. It is found in the extracellular matrix. The protein resides in the vacuole. It carries out the reaction D-threo-isocitrate = glyoxylate + succinate. It catalyses the reaction (2S,3R)-3-hydroxybutane-1,2,3-tricarboxylate = pyruvate + succinate. It participates in carbohydrate metabolism; glyoxylate cycle; (S)-malate from isocitrate: step 1/2. With respect to regulation, phosphorylated and inactivated after addition of glucose to the cell culture (repressing conditions). Its function is as follows. Catalyzes the formation of succinate and glyoxylate from isocitrate, a key step of the glyoxylate cycle, which operates as an anaplerotic route for replenishing the tricarboxylic acid cycle. Required for growth on ethanol or acetate, but dispensable when fermentable carbon sources are available. Also acts on 2-methylisocitrate. This is Isocitrate lyase from Saccharomyces cerevisiae (strain ATCC 204508 / S288c) (Baker's yeast).